The chain runs to 259 residues: Uridylate kinase (259 aa).

Position 21–24 (21–24 (KLSG)) interacts with ATP. Residue G63 participates in UMP binding. 2 residues coordinate ATP: G64 and R68. UMP-binding positions include D83 and 144–151 (TGNPYFTT). ATP is bound by residues T171, F177, and D180.

It belongs to the UMP kinase family. As to quaternary structure, homohexamer.

It localises to the cytoplasm. It catalyses the reaction UMP + ATP = UDP + ADP. It participates in pyrimidine metabolism; CTP biosynthesis via de novo pathway; UDP from UMP (UMPK route): step 1/1. With respect to regulation, inhibited by UTP. Its function is as follows. Catalyzes the reversible phosphorylation of UMP to UDP. The protein is Uridylate kinase of Salinibacter ruber (strain DSM 13855 / M31).